We begin with the raw amino-acid sequence, 96 residues long: ATP synthase subunit c (96 aa).

Transmembrane regions (helical) follow at residues 24-44 (HVGAYIGAGMAMTAAAGVGVG) and 75-95 (AIAESSAIYGLIIAFILIFVA).

The protein belongs to the ATPase C chain family. In terms of assembly, F-type ATPases have 2 components, F(1) - the catalytic core - and F(0) - the membrane proton channel. F(1) has five subunits: alpha(3), beta(3), gamma(1), delta(1), epsilon(1). F(0) has three main subunits: a(1), b(2) and c(10-14). The alpha and beta chains form an alternating ring which encloses part of the gamma chain. F(1) is attached to F(0) by a central stalk formed by the gamma and epsilon chains, while a peripheral stalk is formed by the delta and b chains.

It localises to the cell membrane. In terms of biological role, f(1)F(0) ATP synthase produces ATP from ADP in the presence of a proton or sodium gradient. F-type ATPases consist of two structural domains, F(1) containing the extramembraneous catalytic core and F(0) containing the membrane proton channel, linked together by a central stalk and a peripheral stalk. During catalysis, ATP synthesis in the catalytic domain of F(1) is coupled via a rotary mechanism of the central stalk subunits to proton translocation. Key component of the F(0) channel; it plays a direct role in translocation across the membrane. A homomeric c-ring of between 10-14 subunits forms the central stalk rotor element with the F(1) delta and epsilon subunits. This chain is ATP synthase subunit c, found in Mycoplasmoides gallisepticum (strain R(low / passage 15 / clone 2)) (Mycoplasma gallisepticum).